The primary structure comprises 392 residues: Chaperone protein DnaJ 1 (392 aa).

In terms of domain architecture, J spans D4–G67. The segment at G134–T216 adopts a CR-type zinc-finger fold. Zn(2+) is bound by residues C147, C150, C164, C167, C190, C193, C204, and C207. 4 CXXCXGXG motif repeats span residues C147–G154, C164–G171, C190–G197, and C204–G211. Residues E367–G392 form a disordered region.

Belongs to the DnaJ family. In terms of assembly, homodimer. It depends on Zn(2+) as a cofactor.

Its subcellular location is the cytoplasm. Functionally, participates actively in the response to hyperosmotic and heat shock by preventing the aggregation of stress-denatured proteins and by disaggregating proteins, also in an autonomous, DnaK-independent fashion. Unfolded proteins bind initially to DnaJ; upon interaction with the DnaJ-bound protein, DnaK hydrolyzes its bound ATP, resulting in the formation of a stable complex. GrpE releases ADP from DnaK; ATP binding to DnaK triggers the release of the substrate protein, thus completing the reaction cycle. Several rounds of ATP-dependent interactions between DnaJ, DnaK and GrpE are required for fully efficient folding. Also involved, together with DnaK and GrpE, in the DNA replication of plasmids through activation of initiation proteins. The chain is Chaperone protein DnaJ 1 from Cutibacterium acnes (strain DSM 16379 / KPA171202) (Propionibacterium acnes).